The following is a 172-amino-acid chain: Endoribonuclease YbeY (172 aa).

The Zn(2+) site is built by histidine 124, histidine 128, and histidine 134.

It belongs to the endoribonuclease YbeY family. The cofactor is Zn(2+).

Its subcellular location is the cytoplasm. Single strand-specific metallo-endoribonuclease involved in late-stage 70S ribosome quality control and in maturation of the 3' terminus of the 16S rRNA. The chain is Endoribonuclease YbeY from Rhodopseudomonas palustris (strain BisA53).